Here is a 446-residue protein sequence, read N- to C-terminus: Signal recognition particle 54 kDa protein (446 aa).

Residues 103–110 (GVQGTGKT), 185–189 (DTAGR), and 245–248 (TKMD) contribute to the GTP site.

The protein belongs to the GTP-binding SRP family. SRP54 subfamily. Part of the signal recognition particle protein translocation system, which is composed of SRP and FtsY. Archaeal SRP consists of a 7S RNA molecule of 300 nucleotides and two protein subunits: SRP54 and SRP19.

It is found in the cytoplasm. The enzyme catalyses GTP + H2O = GDP + phosphate + H(+). In terms of biological role, involved in targeting and insertion of nascent membrane proteins into the cytoplasmic membrane. Binds to the hydrophobic signal sequence of the ribosome-nascent chain (RNC) as it emerges from the ribosomes. The SRP-RNC complex is then targeted to the cytoplasmic membrane where it interacts with the SRP receptor FtsY. The sequence is that of Signal recognition particle 54 kDa protein from Metallosphaera sedula (strain ATCC 51363 / DSM 5348 / JCM 9185 / NBRC 15509 / TH2).